The following is a 617-amino-acid chain: MLAGCSFSSSRHQMSTAQRFDILPCGFSKRGSRGDGAAPRVAGDARSGATTCSFRTHPAPPVTQSVSWGAKPEPGGNGNGAHRAVKRAHDEDAVEEYGPIVRAKRTRMGGDGDEVWFHQSIAGTMQATAAGEGEEAEEEKVFLVPSAAAFPHGMAAAGPSLAAAKKEEYSKSPSDSSSSSGTDGGSSAMMPPPQPPEFDARNGVPAPGQAEREALELVRALTACADSLSAGNHEAANYYLARLGEMASPAGPTPMHRVAAYFTEALALRVVRMWPHMFDIGPPRELTDDAFGGGDDDAMALRILNAITPIPRFLHFTLNERLLREFEGHERVHVIDFDIKQGLQWPGLLQSLAARAVPPAHVRITGVGESRQELQETGARLARVAAALGLAFEFHAVVDRLEDVRLWMLHVKRGECVAVNCVLAMHRLLRDDAALTDFLGLARSTGATILLLGEHEGGGLNSGRWEARFARALRYYAAAFDAVDAAGLPEASPARAKAEEMFAREIRNAVAFEGPERFERHESFAGWRRRMEDGGGFKNAGIGEREAMQGRMIARMFGPDKYTVQAHGGGGSGGGEALTLRWLDQPLYTVTAWTPAGDGAGGSTVSASTTASHSQQS.

2 disordered regions span residues 29-92 (KRGS…HDED) and 159-206 (PSLA…GVPA). Residues 171 to 187 (KSPSDSSSSSGTDGGSS) are compositionally biased toward low complexity. Positions 208 to 594 (GQAEREALEL…QPLYTVTAWT (387 aa)) constitute a GRAS domain. A leucine repeat I (LRI) region spans residues 215 to 295 (LELVRALTAC…LTDDAFGGGD (81 aa)). The interval 301–366 (LRILNAITPI…VPPAHVRITG (66 aa)) is VHIID. The VHIID motif lies at 332-336 (VHVID). The segment at 376–408 (ETGARLARVAAALGLAFEFHAVVDRLEDVRLWM) is leucine repeat II (LRII). The tract at residues 417-508 (VAVNCVLAMH…EEMFAREIRN (92 aa)) is PFYRE. The segment at 511 to 594 (AFEGPERFER…QPLYTVTAWT (84 aa)) is SAW. A disordered region spans residues 596 to 617 (AGDGAGGSTVSASTTASHSQQS). Over residues 603–617 (STVSASTTASHSQQS) the composition is skewed to low complexity.

The protein belongs to the GRAS family. Interacts with GSK2. Interacts with SMOS1 (via C-terminus). Phosphorylated on serine and threonine residues by GSK2. Dephosphorylated during response to brassinosteroid. Expressed in the shoot apical meristem (SAM) and elongating cells of young seedlings. Expressed in leaf joints, culms, internodes, stems, young panicles, primary roots and lateral roots.

It localises to the nucleus. Probable transcription factor that acts as a positive regulator of brassinosteroid (BR) signaling. Functions downstream of BRI1 and GSK2 to modulate BR responses. Acts as a direct target of GSK2 kinase to mediate BR responses. Involved in feedback inhibition of BR biosynthetic genes. Repressed by BZR1. Cooperatively functions in a transactivating complex with SMOS1 to enhance the transcription of the SMOS1 target PHI-1, and regulate plant organ size. Interaction between SMOS1 and DLT is a crosstalk point for auxin and brassinosteroid signaling. This chain is Protein DWARF AND LOW-TILLERING, found in Oryza sativa subsp. japonica (Rice).